Consider the following 824-residue polypeptide: ABC transporter B family member 7 (824 aa).

Positions 41 to 101 are disordered; sequence RNSVKFNLDT…NKNNKNKINN (61 aa). The segment covering 63-101 has biased composition (low complexity); sequence NNNKNNNNNNNNNNNNNNNNNNNNNNNNNNKNNKNKINN. 6 helical membrane-spanning segments follow: residues 164–184, 252–272, 325–345, 347–367, 431–451, and 461–481; these read IWYFVFAFLALSITTLCQLAL, WIIIIVLVQTPFLFARYLLFT, LSTLVRCSLQLIGGLLILVFL, WKVTLLMISFLVILLISFLVF, AFWISFGSLLVMGTIIGIYGF, and ILLLQFILYSLMITASMNGLI. The ABC transmembrane type-1 domain occupies 167 to 489; that stretch reads FVFAFLALSI…LIGSINEIQK (323 aa). The region spanning 521–767 is the ABC transporter domain; it reads ISFDNVYFNN…STSFYVTSVL (247 aa). 570–576 provides a ligand contact to ATP; that stretch reads GPSQSKE. A disordered region spans residues 772-813; that stretch reads NKYNNNNNNNNNNNNNNNNNNNNNNNNNNNNNNNNNNNNINN.

Belongs to the ABC transporter superfamily. ABCB family.

It localises to the membrane. This chain is ABC transporter B family member 7 (abcB7), found in Dictyostelium discoideum (Social amoeba).